We begin with the raw amino-acid sequence, 542 residues long: Mitochondrial distribution and morphology protein 34 (542 aa).

An SMP-LTD domain is found at 1-216 (MSFRFNKGAF…LPSVIFSMSQ (216 aa)). Disordered stretches follow at residues 27-58 (LNSKTQSSSQTAPANTTNSAATDEVKQETRGP) and 372-435 (SSGD…TTAV). Positions 31-48 (TQSSSQTAPANTTNSAAT) are enriched in low complexity. A compositionally biased stretch (basic and acidic residues) spans 49–58 (DEVKQETRGP). A compositionally biased stretch (basic residues) spans 379 to 394 (IRRRKIKMGKKSKSKK). Positions 403–414 (SSPTVVMPSSPS) are enriched in low complexity.

Belongs to the MDM34 family. As to quaternary structure, component of the ER-mitochondria encounter structure (ERMES) or MDM complex, composed of MMM1, MDM10, MDM12 and MDM34.

Its subcellular location is the mitochondrion outer membrane. Functionally, component of the ERMES/MDM complex, which serves as a molecular tether to connect the endoplasmic reticulum (ER) and mitochondria. Components of this complex are involved in the control of mitochondrial shape and protein biogenesis, and function in nonvesicular lipid trafficking between the ER and mitochondria. MDM34 is required for the interaction of the ER-resident membrane protein MMM1 and the outer mitochondrial membrane-resident beta-barrel protein MDM10. This chain is Mitochondrial distribution and morphology protein 34, found in Lachancea thermotolerans (strain ATCC 56472 / CBS 6340 / NRRL Y-8284) (Yeast).